The chain runs to 269 residues: 4-chlorobenzoyl coenzyme A dehalogenase (269 aa).

Substrate contacts are provided by residues Arg24 and 62 to 67; that span reads AGFYLR. The active-site Proton acceptor is His90. Residue Gly114 participates in substrate binding. Asp145 (nucleophile) is an active-site residue. Arg257 provides a ligand contact to substrate.

It belongs to the enoyl-CoA hydratase/isomerase family. In terms of assembly, homotetramer. Homotetramer, homooctamer and larger multimers. Homotrimer.

It catalyses the reaction 4-chlorobenzoyl-CoA + H2O = 4-hydroxybenzoyl-CoA + chloride + H(+). It participates in xenobiotic degradation; 4-chlorobenzoate degradation; 4-hydroxybenzoate from 4-chlorobenzoate: step 2/3. Its activity is regulated as follows. Inactivated by 1 mM Ag(+) and by 5 mM Cu(2+). Partially inhibited by 5 mM Zn(2+), Mn(2+), Co(2+), Fe(2+) and Ni(2+). Unaffected by 10 mM Na(+), K(+) and Li(+) and by 0.5 mM Mg(2+), Mn(2+), Fe(2+), Ca(2+), Co(2+) and Zn(2+). Inhibited by the sulfhydryl blocking agent 5,5'-dithio-bis-(2-nitrobenzoate), SDS and N-bromosuccinimide. Unaffected by sodium azide and EDTA. Inactivated following treatment with diethyl pyrocarbonate; this inactivation is reversible by treatment with hydroxylamine. Dehalogenates 4-chlorobenzoyl-CoA, 4-iodobenzoyl-CoA and 4-bromobenzoyl-CoA, but not 4-fluorobenzoyl-CoA. Inactive towards crotonyl-CoA, alpha-methylcrotonyl-CoA and beta-methylcrotonyl-CoA. In Pseudomonas sp. (strain CBS-3), this protein is 4-chlorobenzoyl coenzyme A dehalogenase.